We begin with the raw amino-acid sequence, 314 residues long: Dihydroorotate dehydrogenase (fumarate) (314 aa).

Residues Lys46, 70 to 74 (NSMGL), and Asn130 each bind substrate. Position 46 to 47 (46 to 47 (KS)) interacts with FMN. Position 130 (Asn130) interacts with FMN. Residues Ser132 and Cys133 each act as nucleophile in the active site. FMN contacts are provided by Lys167 and Ile195. A substrate-binding site is contributed by 196–197 (NS). Residues Gly224, 252–253 (GG), and 274–275 (GT) contribute to the FMN site.

The protein belongs to the dihydroorotate dehydrogenase family. Type 1 subfamily. As to quaternary structure, homodimer. FMN serves as cofactor.

The protein localises to the cytoplasm. It catalyses the reaction (S)-dihydroorotate + fumarate = orotate + succinate. It participates in pyrimidine metabolism; UMP biosynthesis via de novo pathway. Its function is as follows. Catalyzes the conversion of dihydroorotate to orotate with fumarate as the electron acceptor. The sequence is that of Dihydroorotate dehydrogenase (fumarate) (URA1) from Saccharomyces mikatae (Yeast).